Here is a 211-residue protein sequence, read N- to C-terminus: Arginine exporter protein ArgO (211 aa).

Residues 1-38 are Cytoplasmic-facing; sequence MFSYYFQGLALGAAMILPLGPQNAFVMNQGIRRQYHIM. Residues 39 to 58 form a helical membrane-spanning segment; it reads IALLCAISDLVLICAGIFGG. Topologically, residues 59-63 are periplasmic; that stretch reads SALLM. A helical membrane pass occupies residues 64 to 91; the sequence is QSPWLLALVTWGGVAFLLWYGFGAFKTA. The Cytoplasmic portion of the chain corresponds to 92-102; sequence MSSNIELASAE. Residues 103-130 traverse the membrane as a helical segment; sequence VMKQGRWKIIATMLAVTWLNPHVYLDTF. The Periplasmic segment spans residues 131 to 140; the sequence is VVLGSLGGQL. The helical transmembrane segment at 141–170 threads the bilayer; it reads DVEPKRWFALGTISASFLWFFGLALLAAWL. At 171-173 the chain is on the cytoplasmic side; sequence APR. A helical transmembrane segment spans residues 174–200; that stretch reads LRTAKAQRIINLVVGCVMWFIALQLAR. The Periplasmic segment spans residues 201 to 211; that stretch reads DGIAHAQALFS.

It belongs to the LysE/ArgO transporter (TC 2.A.75) family. In terms of assembly, monomer.

It localises to the cell inner membrane. It catalyses the reaction L-arginine(in) = L-arginine(out). Involved in the export of arginine. Important to control the intracellular level of arginine and the correct balance between arginine and lysine. May also be involved in the export of canavanine (a plant-derived antimetabolite). This Escherichia coli (strain K12) protein is Arginine exporter protein ArgO.